The chain runs to 512 residues: Cytochrome P450 76C2 (512 aa).

The chain crosses the membrane as a helical span at residues 3–23 (IIFEQALFPLFCFVLSFFIIF). Cys451 serves as a coordination point for heme.

The protein belongs to the cytochrome P450 family. It depends on heme as a cofactor.

The protein resides in the membrane. This is Cytochrome P450 76C2 (CYP76C2) from Arabidopsis thaliana (Mouse-ear cress).